A 236-amino-acid chain; its full sequence is Purine nucleoside phosphorylase DeoD-type 2 (236 aa).

An a purine D-ribonucleoside-binding site is contributed by His-5. Phosphate-binding positions include Gly-21, Arg-25, Arg-44, and 88-91 (RVGT). A purine D-ribonucleoside-binding positions include 180–182 (EME) and 204–205 (SD). The Proton donor role is filled by Asp-205.

The protein belongs to the PNP/UDP phosphorylase family. As to quaternary structure, homohexamer; trimer of homodimers.

It catalyses the reaction a purine D-ribonucleoside + phosphate = a purine nucleobase + alpha-D-ribose 1-phosphate. The enzyme catalyses a purine 2'-deoxy-D-ribonucleoside + phosphate = a purine nucleobase + 2-deoxy-alpha-D-ribose 1-phosphate. Functionally, catalyzes the reversible phosphorolytic breakdown of the N-glycosidic bond in the beta-(deoxy)ribonucleoside molecules, with the formation of the corresponding free purine bases and pentose-1-phosphate. The protein is Purine nucleoside phosphorylase DeoD-type 2 of Shewanella oneidensis (strain ATCC 700550 / JCM 31522 / CIP 106686 / LMG 19005 / NCIMB 14063 / MR-1).